The primary structure comprises 271 residues: 3-methyl-2-oxobutanoate hydroxymethyltransferase (271 aa).

D51 and D90 together coordinate Mg(2+). 3-methyl-2-oxobutanoate contacts are provided by residues 51–52, D90, and K118; that span reads DS. E120 contacts Mg(2+). Residue E186 is the Proton acceptor of the active site.

The protein belongs to the PanB family. In terms of assembly, homodecamer; pentamer of dimers. It depends on Mg(2+) as a cofactor.

It localises to the cytoplasm. The catalysed reaction is 3-methyl-2-oxobutanoate + (6R)-5,10-methylene-5,6,7,8-tetrahydrofolate + H2O = 2-dehydropantoate + (6S)-5,6,7,8-tetrahydrofolate. It functions in the pathway cofactor biosynthesis; (R)-pantothenate biosynthesis; (R)-pantoate from 3-methyl-2-oxobutanoate: step 1/2. In terms of biological role, catalyzes the reversible reaction in which hydroxymethyl group from 5,10-methylenetetrahydrofolate is transferred onto alpha-ketoisovalerate to form ketopantoate. This is 3-methyl-2-oxobutanoate hydroxymethyltransferase from Xanthomonas euvesicatoria pv. vesicatoria (strain 85-10) (Xanthomonas campestris pv. vesicatoria).